The chain runs to 917 residues: Protein translocase subunit SecA (917 aa).

Residues glutamine 87, 105–109, and aspartate 513 each bind ATP; that span reads GEGKT. Positions 834-917 are disordered; it reads EEQMNEMEKR…YKSCHGKLTG (84 aa). Positions 839–852 are enriched in basic and acidic residues; sequence EMEKRRQEEAERQR. The span at 862-876 shows a compositional bias: low complexity; that stretch reads APSQLAAPATPATPE. Zn(2+)-binding residues include cysteine 900, cysteine 902, cysteine 911, and histidine 912.

The protein belongs to the SecA family. As to quaternary structure, monomer and homodimer. Part of the essential Sec protein translocation apparatus which comprises SecA, SecYEG and auxiliary proteins SecDF-YajC and YidC. It depends on Zn(2+) as a cofactor.

The protein localises to the cell inner membrane. It is found in the cytoplasm. It catalyses the reaction ATP + H2O + cellular proteinSide 1 = ADP + phosphate + cellular proteinSide 2.. Its function is as follows. Part of the Sec protein translocase complex. Interacts with the SecYEG preprotein conducting channel. Has a central role in coupling the hydrolysis of ATP to the transfer of proteins into and across the cell membrane, serving both as a receptor for the preprotein-SecB complex and as an ATP-driven molecular motor driving the stepwise translocation of polypeptide chains across the membrane. In Saccharophagus degradans (strain 2-40 / ATCC 43961 / DSM 17024), this protein is Protein translocase subunit SecA.